The sequence spans 225 residues: Putative ATP-dependent Clp protease proteolytic subunit-like (225 aa).

It belongs to the peptidase S14 family.

Has lost the two conserved residues (Ser and His) proposed to be part of the active site. Therefore it could be inactive. The sequence is that of Putative ATP-dependent Clp protease proteolytic subunit-like (clpR) from Synechocystis sp. (strain ATCC 27184 / PCC 6803 / Kazusa).